We begin with the raw amino-acid sequence, 786 residues long: Cas scaffolding protein family member 4 (786 aa).

Residues 11 to 73 (PKALLARALY…PANRLQILTE (63 aa)) enclose the SH3 domain. Phosphoserine is present on residues Ser200 and Ser249. Residues 262 to 295 (SFAEESRPHALPSSSSTFYNPPSGRSRSLTPQLN) form a disordered region. The segment covering 273–295 (PSSSSTFYNPPSGRSRSLTPQLN) has biased composition (polar residues). Phosphoserine is present on Ser305. 2 disordered regions span residues 361–429 (QAGK…SEES) and 612–670 (IQPP…ERKP). Residues 364 to 373 (KELEKAKEVS) show a composition bias toward basic and acidic residues. Over residues 374–391 (ENSAGHNSSWFSRRTTSP) the composition is skewed to polar residues. 2 positions are modified to phosphoserine: Ser376 and Ser390. Over residues 399–427 (SGSSSDSRASIVSSCSTTSTDDSSSSSSE) the composition is skewed to low complexity. Over residues 630–642 (KQREDEHSSELLK) the composition is skewed to basic and acidic residues.

It belongs to the CAS family. Interacts (via SH3 domain) with PTK2/FAK1 (via C-terminus). In terms of processing, phosphorylated on tyrosines by SRC. Expressed abundantly in lung and spleen. Also highly expressed in ovarian and leukemia cell lines.

The protein localises to the cytoplasm. It localises to the cytoskeleton. The protein resides in the cell junction. It is found in the focal adhesion. Functionally, docking protein that plays a role in tyrosine kinase-based signaling related to cell adhesion and cell spreading. Regulates PTK2/FAK1 activity, focal adhesion integrity, and cell spreading. The polypeptide is Cas scaffolding protein family member 4 (CASS4) (Homo sapiens (Human)).